Consider the following 307-residue polypeptide: Dioxygenase cdmD (307 aa).

Fe cation-binding residues include histidine 146, aspartate 148, and histidine 226.

Belongs to the PhyH family. Homodimer. It depends on Fe cation as a cofactor.

It catalyses the reaction verruculide A + 2-oxoglutarate + O2 = chrodrimanin T + succinate + CO2. It carries out the reaction chrodrimanin E + 2-oxoglutarate + O2 = chrodrimanin A + succinate + CO2. It participates in secondary metabolite biosynthesis; terpenoid biosynthesis. Its function is as follows. Dioxygenase; part of the gene cluster that mediates the biosynthesis of chrodrimanin B, a meroterpenoid that acts as a potent blocker of insect GABA-gated chloride channels. The first step of the pathway is the biosynthesis of 6-hydroxymellein by the polyketide synthase cdmE. The prenyltransferase cdmH acts as a 6-hydroxymellein 5-farnesyltransferase and produces the hydrophobic metabolite verruculide C. The FAD-dependent monooxygenase cdmI further converts verruculide C into verruculide B. The terpene cyclase cdmG then produced the pentacyclic molecule 3-hydroxypentacecilide A, the backbone structure of chrodrimanin B, via folding the farnesyl moiety of the substrate into the chair-boat conformation. The short-chain dehydrogenase/reductase cdmF functions as the 3-OH dehydrogenase that oxidizes the C-3 hydroxyl group of 3-hydroxypentacecilide A and produces chrodrimanin C, the dehydrogenated product of 3-hydroxypentacecilide A. The cytochrome P450 monooxygenase cdmJ then accepts both 3-hydroxypentacecilide A and chrodrimanin C and functions as a C-7-beta-hydroxylase to produce respectively chrodrimanin H and chrodrimanin F. The dioxygenase cdmA accepts chrodrimanin H to afford chrodrimanin E, which is further transformed to chrodrimanin A by the dioxygenase cdmD. CdmA can also accept chrodrimanin C as substrate to convert it into verruculide A, which is further converted into chrodrimanin T by cdmD. The last step of the biosynthesis is proposed to be performed by the acetyltransferase cdmC which acetylates chrodrimanin A to yield chrodrimanin B. The pathway may also lead to the production of additional shunt products, including chrodrimanins T and U. The protein is Dioxygenase cdmD of Talaromyces verruculosus (Penicillium verruculosum).